Reading from the N-terminus, the 362-residue chain is Sphingosine 1-phosphate receptor 1 (362 aa).

Residues 1-25 are Extracellular-facing; it reads MDDLIARHYNFTGKFRKVHKDPGLK. A glycan (N-linked (GlcNAc...) asparagine) is linked at Asn10. Residues 26-47 traverse the membrane as a helical segment; sequence ADSVVFIIVCCFIILENVLVLL. Residues 48-61 are Cytoplasmic-facing; it reads TIWRTKKFHKPMYY. Residues 62–83 traverse the membrane as a helical segment; sequence FIGNLALSDLLAGVVYTANILL. The Extracellular portion of the chain corresponds to 84–95; that stretch reads SGANTYKLTPTQ. A helical transmembrane segment spans residues 96 to 117; that stretch reads WFFREGSMFVALAASVFSLLAI. 99–100 contacts sphing-4-enine 1-phosphate; it reads RE. Topologically, residues 118–139 are cytoplasmic; the sequence is AIERHLTMLKMKLHNNGKTCRV. A helical membrane pass occupies residues 140 to 161; it reads FMLISTVWFIAAILGGLPVMGW. The Extracellular portion of the chain corresponds to 162 to 175; it reads NCIDSMNNCSTVLP. A disulfide bridge connects residues Cys163 and Cys170. Asn169 carries N-linked (GlcNAc...) asparagine glycosylation. Residues 176–203 traverse the membrane as a helical segment; that stretch reads LYHKAYILFCTTVFSVILMAIVILYARI. At 204–238 the chain is on the cytoplasmic side; it reads YALVRTRSRKLVFRKVANGRGSNKSSEKSMALLKT. The chain crosses the membrane as a helical span at residues 239–259; sequence VIIVLSCFIACWAPLFILLLL. 246–250 contacts sphing-4-enine 1-phosphate; the sequence is FIACW. At 260–270 the chain is on the extracellular side; sequence DVACQTLTCSI. The cysteines at positions 263 and 268 are disulfide-linked. A helical transmembrane segment spans residues 271 to 291; the sequence is LYKAEWFLALAVLNSAMNPLI. The Cytoplasmic portion of the chain corresponds to 292–362; sequence YTLTSNEMRR…VSSGNITSSS (71 aa). Residue Cys309 is the site of S-palmitoyl cysteine attachment. Residues 328 to 362 are disordered; that stretch reads FSRSKSDNSSHPNKDEPEYSPRETIVSSGNITSSS. The span at 329–348 shows a compositional bias: basic and acidic residues; that stretch reads SRSKSDNSSHPNKDEPEYSP. Positions 352–362 are enriched in polar residues; sequence IVSSGNITSSS.

The protein belongs to the G-protein coupled receptor 1 family.

The protein resides in the cell membrane. In terms of biological role, G-protein coupled receptor for the bioactive lysosphingolipid sphingosine 1-phosphate (S1P) that seems to be coupled to the G(i) subclass of heteromeric G proteins. Signaling leads to the activation of RAC1, SRC, PTK2/FAK1 and MAP kinases. Plays an important role in cell migration, probably via its role in the reorganization of the actin cytoskeleton and the formation of lamellipodia in response to stimuli that increase the activity of the sphingosine kinase SPHK1. Required for normal chemotaxis toward sphingosine 1-phosphate. In Danio rerio (Zebrafish), this protein is Sphingosine 1-phosphate receptor 1 (s1pr1).